The chain runs to 628 residues: NUAK family SNF1-like kinase 2 (628 aa).

Methionine 1 bears the N-acetylmethionine mark. Residues 53–303 enclose the Protein kinase domain; sequence YEFLETLGKG…LEDVASHWWV (251 aa). Residues 59 to 67 and lysine 81 each bind ATP; that span reads LGKGTYGKV. The active-site Proton acceptor is the aspartate 175. The residue at position 208 (threonine 208) is a Phosphothreonine. Disordered stretches follow at residues 355–492 and 522–570; these read KQHA…PQAS and GSLD…PLRG. Over residues 428–444 the composition is skewed to pro residues; sequence ELSPIPVSPGQAAPPLP. Serine 435 carries the post-translational modification Phosphoserine. Positions 457 to 469 are enriched in low complexity; the sequence is SGYYSSPEPSESG. 4 positions are modified to phosphoserine: serine 523, serine 544, serine 547, and serine 573.

Belongs to the protein kinase superfamily. CAMK Ser/Thr protein kinase family. SNF1 subfamily. It depends on Mg(2+) as a cofactor. Phosphorylated at Thr-208 by STK11/LKB1 in complex with STE20-related adapter-alpha (STRADA) pseudo kinase and CAB39. Autophosphorylation is also possible at Thr-208.

The catalysed reaction is L-seryl-[protein] + ATP = O-phospho-L-seryl-[protein] + ADP + H(+). The enzyme catalyses L-threonyl-[protein] + ATP = O-phospho-L-threonyl-[protein] + ADP + H(+). Its activity is regulated as follows. Activated by phosphorylation on Thr-208. In terms of biological role, stress-activated kinase involved in tolerance to glucose starvation. Induces cell-cell detachment by increasing F-actin conversion to G-actin. Expression is induced by CD95 or TNF-alpha, via NF-kappa-B. Protects cells from CD95-mediated apoptosis and is required for the increased motility and invasiveness of CD95-activated tumor cells. Phosphorylates LATS1 and LATS2. Plays a key role in neural tube closure during embryonic development through LATS2 phosphorylation and regulation of the nuclear localization of YAP1 a critical downstream regulatory target in the Hippo signaling pathway. The sequence is that of NUAK family SNF1-like kinase 2 from Pongo abelii (Sumatran orangutan).